The chain runs to 257 residues: Pantothenate synthetase (257 aa).

Residue 29-36 (MGNLHAGH) coordinates ATP. Residue His-36 is the Proton donor of the active site. Position 60 (Gln-60) interacts with (R)-pantoate. Position 60 (Gln-60) interacts with beta-alanine. 145–148 (GEKD) is a binding site for ATP. Gln-151 contributes to the (R)-pantoate binding site. ATP-binding positions include Val-174 and 182 to 185 (LSSR).

This sequence belongs to the pantothenate synthetase family. As to quaternary structure, homodimer.

It is found in the cytoplasm. It carries out the reaction (R)-pantoate + beta-alanine + ATP = (R)-pantothenate + AMP + diphosphate + H(+). It participates in cofactor biosynthesis; (R)-pantothenate biosynthesis; (R)-pantothenate from (R)-pantoate and beta-alanine: step 1/1. Its function is as follows. Catalyzes the condensation of pantoate with beta-alanine in an ATP-dependent reaction via a pantoyl-adenylate intermediate. The chain is Pantothenate synthetase from Coxiella burnetii (strain CbuK_Q154) (Coxiella burnetii (strain Q154)).